Here is a 972-residue protein sequence, read N- to C-terminus: 116 kDa U5 small nuclear ribonucleoprotein component (972 aa).

Met-1 carries the N-acetylmethionine modification. A disordered region spans residues 1–54 (MDTDLYDEFGNYIGPELDSDEDDDELGRETKDLDEMDDDDDDDDVGDHDDDHPG). Composition is skewed to acidic residues over residues 17-26 (LDSDEDDDEL) and 34-48 (DEMDDDDDDDDVGDH). At Ser-19 the chain carries Phosphoserine. A Glycyl lysine isopeptide (Lys-Gly) (interchain with G-Cter in SUMO1); alternate cross-link involves residue Lys-64. A Glycyl lysine isopeptide (Lys-Gly) (interchain with G-Cter in SUMO2); alternate cross-link involves residue Lys-64. A Phosphothreonine modification is found at Thr-86. In terms of domain architecture, tr-type G spans 127–409 (ELIRNVTLCG…GIHLTKEELK (283 aa)). GTP contacts are provided by residues 136–143 (GHLHHGKT), 204–208 (DTPGH), and 258–261 (NKID).

This sequence belongs to the TRAFAC class translation factor GTPase superfamily. Classic translation factor GTPase family. EF-G/EF-2 subfamily. Component of the U5 snRNP and the U4/U6-U5 tri-snRNP complex, a building block of the spliceosome. The U4/U6-U5 tri-snRNP complex is composed of the U4, U6 and U5 snRNAs and at least PRPF3, PRPF4, PRPF6, PRPF8, PRPF31, SNRNP200, TXNL4A, SNRNP40, DDX23, CD2BP2, PPIH, SNU13, EFTUD2, SART1 and USP39. Component of the pre-catalytic, catalytic and post-catalytic spliceosome complexes. Component of the minor spliceosome, which splices U12-type introns. Within this complex, interacts with CRIPT. Interacts with ERBB4 and PRPF8. Interacts with PIH1D1. Interacts with RPAP3 and URI1 in a ZNHIT2-dependent manner. Interacts with NRDE2. Interacts with FAM50A. Interacts with UBL5.

Its subcellular location is the nucleus. In terms of biological role, required for pre-mRNA splicing as component of the spliceosome, including pre-catalytic, catalytic and post-catalytic spliceosomal complexes. Component of the U5 snRNP and the U4/U6-U5 tri-snRNP complex, a building block of the spliceosome. As a component of the minor spliceosome, involved in the splicing of U12-type introns in pre-mRNAs. This chain is 116 kDa U5 small nuclear ribonucleoprotein component (EFTUD2), found in Homo sapiens (Human).